A 503-amino-acid polypeptide reads, in one-letter code: Lanosterol 14-alpha demethylase (503 aa).

A helical membrane pass occupies residues 24 to 44; the sequence is GNLLSTLLIACAFTLSLVYLF. Cys449 serves as a coordination point for heme.

It belongs to the cytochrome P450 family. Heme serves as cofactor. Ubiquitinated by MARCHF6, leading to proteasomal degradation.

Its subcellular location is the endoplasmic reticulum membrane. It localises to the microsome membrane. The catalysed reaction is a 14alpha-methyl steroid + 3 reduced [NADPH--hemoprotein reductase] + 3 O2 = a Delta(14) steroid + formate + 3 oxidized [NADPH--hemoprotein reductase] + 4 H2O + 4 H(+). It carries out the reaction lanosterol + 3 reduced [NADPH--hemoprotein reductase] + 3 O2 = 4,4-dimethyl-5alpha-cholesta-8,14,24-trien-3beta-ol + formate + 3 oxidized [NADPH--hemoprotein reductase] + 4 H2O + 4 H(+). It catalyses the reaction 24,25-dihydrolanosterol + 3 reduced [NADPH--hemoprotein reductase] + 3 O2 = 4,4-dimethyl-8,14-cholestadien-3beta-ol + formate + 3 oxidized [NADPH--hemoprotein reductase] + 4 H2O + 4 H(+). The enzyme catalyses a 14alpha-methyl steroid + reduced [NADPH--hemoprotein reductase] + O2 = a 14alpha-hydroxymethyl steroid + oxidized [NADPH--hemoprotein reductase] + H2O + H(+). The catalysed reaction is a 14alpha-hydroxymethyl steroid + reduced [NADPH--hemoprotein reductase] + O2 = a 14alpha-formyl steroid + oxidized [NADPH--hemoprotein reductase] + 2 H2O + H(+). It carries out the reaction a 14alpha-formyl steroid + reduced [NADPH--hemoprotein reductase] + O2 = a Delta(14) steroid + formate + oxidized [NADPH--hemoprotein reductase] + H2O + 2 H(+). It catalyses the reaction lanosterol + reduced [NADPH--hemoprotein reductase] + O2 = 32-hydroxylanosterol + oxidized [NADPH--hemoprotein reductase] + H2O + H(+). The enzyme catalyses 32-hydroxylanosterol + reduced [NADPH--hemoprotein reductase] + O2 = 32-oxolanosterol + oxidized [NADPH--hemoprotein reductase] + 2 H2O + H(+). The catalysed reaction is 32-oxolanosterol + reduced [NADPH--hemoprotein reductase] + O2 = 4,4-dimethyl-5alpha-cholesta-8,14,24-trien-3beta-ol + formate + oxidized [NADPH--hemoprotein reductase] + H2O + 2 H(+). It carries out the reaction 24,25-dihydrolanosterol + reduced [NADPH--hemoprotein reductase] + O2 = 32-hydroxy-24,25-dihydrolanosterol + oxidized [NADPH--hemoprotein reductase] + H2O + H(+). It catalyses the reaction 32-hydroxy-24,25-dihydrolanosterol + reduced [NADPH--hemoprotein reductase] + O2 = 32-oxo-24,25-dihydrolanosterol + oxidized [NADPH--hemoprotein reductase] + 2 H2O + H(+). The enzyme catalyses 32-oxo-24,25-dihydrolanosterol + reduced [NADPH--hemoprotein reductase] + O2 = 4,4-dimethyl-8,14-cholestadien-3beta-ol + formate + oxidized [NADPH--hemoprotein reductase] + H2O + 2 H(+). It participates in steroid biosynthesis; zymosterol biosynthesis; zymosterol from lanosterol: step 1/6. Its activity is regulated as follows. Inhibited by azalanstat. Inhibited by azole antifungal agents ketoconazole, itraconazole and fluconazole. Its function is as follows. Sterol 14alpha-demethylase that plays a critical role in the cholesterol biosynthesis pathway, being cholesterol the major sterol component in mammalian membranes as well as a precursor for bile acid and steroid hormone synthesis. Cytochrome P450 monooxygenase that catalyzes the three-step oxidative removal of the 14alpha-methyl group (C-32) of sterols such as lanosterol (lanosta-8,24-dien-3beta-ol) and 24,25-dihydrolanosterol (DHL) in the form of formate, and converts the sterols to 4,4-dimethyl-5alpha-cholesta-8,14,24-trien-3beta-ol and 4,4-dimethyl-8,14-cholestadien-3beta-ol, respectively, which are intermediates of cholesterol biosynthesis. Can also demethylate substrates not intrinsic to mammals, such as eburicol (24-methylene-24,25-dihydrolanosterol), but at a lower rate than DHL. The polypeptide is Lanosterol 14-alpha demethylase (Rattus norvegicus (Rat)).